Reading from the N-terminus, the 50-residue chain is Large ribosomal subunit protein bL33B (50 aa).

Belongs to the bacterial ribosomal protein bL33 family.

This chain is Large ribosomal subunit protein bL33B, found in Streptococcus agalactiae serotype V (strain ATCC BAA-611 / 2603 V/R).